The primary structure comprises 258 residues: Phycoerythrobilin:ferredoxin oxidoreductase (258 aa).

This sequence belongs to the HY2 family.

The catalysed reaction is (3Z)-phycoerythrobilin + oxidized 2[4Fe-4S]-[ferredoxin] = 15,16-dihydrobiliverdin + reduced 2[4Fe-4S]-[ferredoxin] + 2 H(+). In terms of biological role, catalyzes the two-electron reduction of the C2 and C3(1) diene system of 15,16-dihydrobiliverdin. The chain is Phycoerythrobilin:ferredoxin oxidoreductase from Prochlorococcus marinus (strain NATL1A).